The primary structure comprises 189 residues: Haloacid dehalogenase-like hydrolase domain-containing protein 3 (189 aa).

It belongs to the HAD-like hydrolase superfamily.

The chain is Haloacid dehalogenase-like hydrolase domain-containing protein 3 (hdhd3) from Xenopus tropicalis (Western clawed frog).